The sequence spans 351 residues: Prostaglandin reductase 2 (351 aa).

A substrate-binding site is contributed by Phe99–Tyr100. NADP(+) is bound by residues Gly165–Gly168, Lys192, Tyr208, Asn231, Cys253–Tyr259, Phe287–Val289, and Asn337. Met288–Leu290 is a binding site for substrate.

The protein belongs to the NADP-dependent oxidoreductase L4BD family. In terms of assembly, monomer.

It is found in the cytoplasm. The enzyme catalyses 13,14-dihydro-15-oxo-prostaglandin E2 + NAD(+) = 15-oxoprostaglandin E2 + NADH + H(+). It carries out the reaction 13,14-dihydro-15-oxo-prostaglandin E2 + NADP(+) = 15-oxoprostaglandin E2 + NADPH + H(+). The catalysed reaction is 13,14-dihydro-15-oxo-PGF2alpha + NADP(+) = 15-oxoprostaglandin F2alpha + NADPH + H(+). It catalyses the reaction 13,14-dihydro-15-oxo-prostaglandin E1 + NADP(+) = 15-oxoprostaglandin E1 + NADPH + H(+). The enzyme catalyses 13,14-dihydro-15-oxo-prostaglandin F1alpha + NADP(+) = 15-oxoprostaglandin F1alpha + NADPH + H(+). Functionally, functions as 15-oxo-prostaglandin 13-reductase and acts on 15-keto-PGE1, 15-keto-PGE2, 15-keto-PGE1-alpha and 15-keto-PGE2-alpha with highest activity towards 15-keto-PGE2. Overexpression represses transcriptional activity of PPARG and inhibits adipocyte differentiation. This is Prostaglandin reductase 2 from Rattus norvegicus (Rat).